Here is a 199-residue protein sequence, read N- to C-terminus: 5'-deoxynucleotidase CKO_00504 (199 aa).

Residues 18–19 (RW) and His-33 each bind substrate. The region spanning 30–142 (VSEHSLQVAM…VKQADALCAY (113 aa)) is the HD domain. 3 residues coordinate a divalent metal cation: His-33, His-68, and Asp-69. Substrate is bound by residues Asp-69, 77-80 (DLPT), and Asp-137. An a divalent metal cation-binding site is contributed by Asp-137.

It belongs to the 5DNU family. As to quaternary structure, homodimer. Requires a divalent metal cation as cofactor.

The protein localises to the cytoplasm. The enzyme catalyses a 2'-deoxyribonucleoside 5'-phosphate + H2O = a 2'-deoxyribonucleoside + phosphate. Its function is as follows. Catalyzes the strictly specific dephosphorylation of 2'-deoxyribonucleoside 5'-monophosphates. This Citrobacter koseri (strain ATCC BAA-895 / CDC 4225-83 / SGSC4696) protein is 5'-deoxynucleotidase CKO_00504.